The sequence spans 228 residues: uncharacterized protein (228 aa).

4 helical membrane-spanning segments follow: residues 37–54 (WCMH…TLIV), 67–89 (VVSI…STGV), 104–126 (HIGI…TSRL), and 138–160 (VLHV…LVLY).

It is found in the cell membrane. This is an uncharacterized protein from Treponema pallidum (strain Nichols).